A 354-amino-acid polypeptide reads, in one-letter code: Sorbitol dehydrogenase (354 aa).

Cys43 serves as a coordination point for Zn(2+). Position 49 (Tyr49) interacts with substrate. The Zn(2+) site is built by His67 and Glu68. Position 153 (Glu153) interacts with substrate. Residues Ile181, Asp201, and Arg206 each coordinate NAD(+). Ser208 and Ser222 each carry phosphoserine. NAD(+) is bound by residues Val270–Leu272 and Val294–Arg296. 2 residues coordinate substrate: Arg296 and Tyr297.

It belongs to the zinc-containing alcohol dehydrogenase family. As to quaternary structure, homotetramer. The cofactor is Zn(2+). As to expression, expressed in liver.

Its subcellular location is the mitochondrion membrane. It is found in the cell projection. The protein localises to the cilium. It localises to the flagellum. It catalyses the reaction xylitol + NAD(+) = D-xylulose + NADH + H(+). The enzyme catalyses L-iditol + NAD(+) = keto-L-sorbose + NADH + H(+). The catalysed reaction is keto-D-fructose + NADH + H(+) = D-sorbitol + NAD(+). Polyol dehydrogenase that catalyzes the reversible NAD(+)-dependent oxidation of various sugar alcohols. Is mostly active with xylitol, L-iditol and D-sorbitol (D-glucitol) as substrates, leading to the C2-oxidized products D-xylulose, L-sorbose and D-fructose, respectively. Is a key enzyme in the polyol pathway that interconverts glucose and fructose via sorbitol, which constitutes an important alternate route for glucose metabolism. May play a role in sperm motility by using sorbitol as an alternative energy source for sperm motility. This is Sorbitol dehydrogenase (SORD) from Ovis aries (Sheep).